The chain runs to 255 residues: 1-acyl-sn-glycerol-3-phosphate acyltransferase (255 aa).

Positions 78–83 (HVSWLD) match the HXXXXD motif motif.

This sequence belongs to the 1-acyl-sn-glycerol-3-phosphate acyltransferase family.

It is found in the cell inner membrane. The enzyme catalyses a 1-acyl-sn-glycero-3-phosphate + an acyl-CoA = a 1,2-diacyl-sn-glycero-3-phosphate + CoA. It participates in phospholipid metabolism; CDP-diacylglycerol biosynthesis; CDP-diacylglycerol from sn-glycerol 3-phosphate: step 2/3. Its function is as follows. Converts lysophosphatidic acid (LPA) into phosphatidic acid by incorporating acyl moiety at the 2 position. The protein is 1-acyl-sn-glycerol-3-phosphate acyltransferase (plsC) of Neisseria meningitidis serogroup B (strain ATCC BAA-335 / MC58).